The primary structure comprises 188 residues: Elongation factor P-like protein (188 aa).

This sequence belongs to the elongation factor P family.

This is Elongation factor P-like protein from Stenotrophomonas maltophilia (strain R551-3).